Consider the following 263-residue polypeptide: MQVWAIIYDKADFPDTLYQNALPFVDQAVQSKIKRFHRREDACRSLIGSLLPRVLLRKRGVSRDEMTFATTENGKPYCTTPDIDPPLGFNVTHDESVIAMAFGSGDLGPPAYNLGVDVMQLKVPPRITFSEFVDSVSSQESDQLTARERNIVLADIPEGEALRRFYWVWTLKEAYTKALGIGLGFDFRRIQYDVLEEKVTIDGELARGWQFRKFEVAHSGNKYVGVAARFVGGRNPSITDLDEGSLVCYDAASFVNRAIEELV.

Belongs to the P-Pant transferase superfamily.

The catalysed reaction is apo-[ACP] + CoA = holo-[ACP] + adenosine 3',5'-bisphosphate + H(+). In terms of biological role, transfers the 4'-phosphopantetheine moiety from coenzyme A to a Ser of an acyl-carrier-protein. Activates the peptidyl carrier protein (PCP) domains of surfactin synthas. This chain is 4'-phosphopantetheinyl transferase pptA (pptA), found in Paxillus involutus (Naked brimcap).